Consider the following 1145-residue polypeptide: Probable ATP-dependent RNA helicase DHX34 (1145 aa).

A compositionally biased stretch (basic and acidic residues) spans 1–14; that stretch reads MPPPRTREGRGHRD. Residues 1–27 are disordered; the sequence is MPPPRTREGRGHRDRDHHRAPREEEAP. A Helicase ATP-binding domain is found at 174-334; the sequence is LQTLKEHQVV…FSHAPVVQVP (161 aa). 187–194 provides a ligand contact to ATP; sequence GDTGCGKS. The short motif at 281–284 is the DEAH box element; that stretch reads DEVH. A Helicase C-terminal domain is found at 370–538; the sequence is AIDNKYPPEE…ALVLQMKSMS (169 aa). 2 disordered regions span residues 726-764 and 1091-1114; these read LKRQ…QRAD and NTCP…PQKT. Phosphoserine is present on residues Ser-749 and Ser-750.

It belongs to the DEAD box helicase family. DEAH subfamily. Forms a complex with RUVBL1 and RUVBL2. Part of a complex composed of SMG1, DHX34 and UPF1; within the complex DHX34 acts as a scaffolding protein to facilitate SMG1 phosphorylation of UPF1. Interacts with UPF1, MOV10, EIF4A3, XRN2, SMG6, SMG7, SMG9, UPF3A, UPF3B, CASC3/MLN51, XRN1, DIS3 and DCP1A; the interactions are RNA-independent. Interacts with NCBP1/CPB80; the interaction is RNA-dependent. Interacts (via C-terminus) with SMG1; the interaction is RNA-independent.

The catalysed reaction is ATP + H2O = ADP + phosphate + H(+). Its function is as follows. Probable ATP-binding RNA helicase. Required for nonsense-mediated decay (NMD) degradation of mRNA transcripts containing premature stop codons. Promotes the phosphorylation of UPF1 along with its interaction with key NMD pathway proteins UPF2 and EIF4A3. Negatively regulates the nucleotide binding ability and ATP hydrolysis of the RUVBL1-RUVBL2 complex via induction of N-terminus conformation changes of the RUVBL2 subunits. The protein is Probable ATP-dependent RNA helicase DHX34 of Mus musculus (Mouse).